We begin with the raw amino-acid sequence, 419 residues long: Endochitinase 2 (419 aa).

Positions 1 to 18 are cleaved as a signal peptide; sequence MHHLRALVGVGLAGLAAG. The GH18 domain occupies 35 to 343; sequence AQNVVYWGQN…QQAKSILVNG (309 aa). N-linked (GlcNAc...) asparagine glycosylation occurs at Asn-153. Glu-173 acts as the Proton donor in catalysis. Asn-237 and Asn-256 each carry an N-linked (GlcNAc...) asparagine glycan. A disordered region spans residues 343-390; sequence GAPCPSSGPPSSTPATAPAPTATTMPSSTSVSSPTASPTGGTVPQWGQ. Residues 355-384 are compositionally biased toward low complexity; the sequence is TPATAPAPTATTMPSSTSVSSPTASPTGGT. The region spanning 383–419 is the CBM1 domain; sequence GTVPQWGQCGGEGYSGPTQCVPPYQCVKQGDWWSSCR.

This sequence belongs to the glycosyl hydrolase 18 family. Chitinase class III subfamily.

The protein resides in the secreted. It catalyses the reaction Random endo-hydrolysis of N-acetyl-beta-D-glucosaminide (1-&gt;4)-beta-linkages in chitin and chitodextrins.. In terms of biological role, secreted chitinase involved in the degradation of chitin, a component of the cell walls of fungi and exoskeletal elements of some animals (including worms and arthropods). Participates in the infection process and directly acts in the penetration process of the host cuticle. The chain is Endochitinase 2 (chi2) from Metarhizium anisopliae (Entomophthora anisopliae).